The chain runs to 724 residues: NAD(+) hydrolase SARM1 (724 aa).

The N-terminal 27 residues, 1–27 (MVLTLLLSAYKLCRFFAMSGPRPGAER), are a transit peptide targeting the mitochondrion. An ARM 1 repeat occupies 60–100 (EVQDALERALPELQQALSALKQAGGARAVGAGLAEVFQLVE). Residues W103, R110, 149 to 157 (EQILVAENR), and 190 to 193 (HMFK) each bind NAD(+). ARM repeat units lie at residues 114–153 (QGLC…QILV), 155–193 (ENRD…HMFK), 196–235 (EETC…NCAL), 237–280 (GGQA…LATN), 281–314 (KEVE…CLVD), 315–354 (ASDT…AEAA), and 359–402 (QGKT…EEVP). 2 consecutive SAM domains span residues 412 to 476 (WKEA…LKTF) and 486 to 548 (NLAD…MLHS). 2 positions are modified to phosphoserine: S548 and S558. One can recognise a TIR domain in the interval 560–703 (DTPDVFISYR…KIIRFLQGRS (144 aa)). Residues 569–570 (RR) and E599 each bind NAD(+). Residue E642 is part of the active site. Positions 704 to 724 (SRDSSAGSDTSLEGAAPMGPT) are disordered.

Belongs to the SARM1 family. As to quaternary structure, homooctamer; forms an octameric ring via SAM domains. Interacts with TICAM1/TRIF and thereby interferes with TICAM1/TRIF function. Interacts with MAPK10/JNK3 and SDC2 (via cytoplasmic domain). Phosphorylation at Ser-548 by JNK kinases (MAPK8, MAPK9 and /or MAPK10) enhance the NAD(+) hydrolase (NADase) activity. Phosphorylation at Ser-548 and subsequent activation takes place in response to oxidative stress conditions and inhibits mitochondrial respiration. As to expression, predominantly expressed in brain, kidney and liver. Expressed at lower level in placenta.

It localises to the cytoplasm. The protein resides in the cell projection. Its subcellular location is the axon. The protein localises to the dendrite. It is found in the synapse. It localises to the mitochondrion. The enzyme catalyses NAD(+) + H2O = ADP-D-ribose + nicotinamide + H(+). It catalyses the reaction NAD(+) = cyclic ADP-beta-D-ribose + nicotinamide + H(+). The catalysed reaction is NADP(+) + H2O = ADP-D-ribose 2'-phosphate + nicotinamide + H(+). With respect to regulation, autoinhibited: in the inactive state, the enzymatic TIR domain is held apart by the autoinhibiting ARM repeats. NAD(+)-binding to ARM repeats maintains an inactive state by promoting interaction between ARM repeats and the TIR domain, thereby facilitating inhibition of the enzymatic TIR domain. Following activation, possibly by nicotinamide mononucleotide (NMN), auto-inhibitory interactions are released, allowing self-association of the TIR domains and subsequent activation of the NAD(+) hydrolase (NADase) activity. Self-association of TIR domains is facilitated by the octamer of SAM domains. NAD(+) hydrolase activity is inhibited by nicotinamide. Specifically inhibited by berberine chloride and zinc chloride. NAD(+) hydrolase, which plays a key role in axonal degeneration following injury by regulating NAD(+) metabolism. Acts as a negative regulator of MYD88- and TRIF-dependent toll-like receptor signaling pathway by promoting Wallerian degeneration, an injury-induced form of programmed subcellular death which involves degeneration of an axon distal to the injury site. Wallerian degeneration is triggered by NAD(+) depletion: in response to injury, SARM1 is activated and catalyzes cleavage of NAD(+) into ADP-D-ribose (ADPR), cyclic ADPR (cADPR) and nicotinamide; NAD(+) cleavage promoting cytoskeletal degradation and axon destruction. Also able to hydrolyze NADP(+), but not other NAD(+)-related molecules. Can activate neuronal cell death in response to stress. Regulates dendritic arborization through the MAPK4-JNK pathway. Involved in innate immune response: inhibits both TICAM1/TRIF- and MYD88-dependent activation of JUN/AP-1, TRIF-dependent activation of NF-kappa-B and IRF3, and the phosphorylation of MAPK14/p38. This chain is NAD(+) hydrolase SARM1, found in Homo sapiens (Human).